Consider the following 565-residue polypeptide: Periplasmic trehalase (565 aa).

A signal peptide spans 1–30 (MKSPTPSRPQKMALIPACIFLCFAALSVQA). Substrate is bound by residues arginine 152, 159–160 (WD), asparagine 196, 205–207 (RSQ), 277–279 (RPE), and glycine 310. Active-site proton donor/acceptor residues include aspartate 312 and glutamate 496. Glutamate 511 provides a ligand contact to substrate. The interval 539 to 565 (CDNVPATRPLSESTTQPLKQKEAEPTP) is disordered.

The protein belongs to the glycosyl hydrolase 37 family. Monomer.

The protein localises to the periplasm. The enzyme catalyses alpha,alpha-trehalose + H2O = alpha-D-glucose + beta-D-glucose. In terms of biological role, provides the cells with the ability to utilize trehalose at high osmolarity by splitting it into glucose molecules that can subsequently be taken up by the phosphotransferase-mediated uptake system. This is Periplasmic trehalase from Escherichia coli (strain SMS-3-5 / SECEC).